A 235-amino-acid chain; its full sequence is Ornithine decarboxylase antizyme 3 (235 aa).

Residues Ser-9 and Ser-12 each carry the phosphoserine modification.

It belongs to the ODC antizyme family. As to quaternary structure, interacts with ODC1 and thereby sterically blocks ODC homodimerization. Interacts with AZIN2; this interaction disrupts the interaction between the antizyme and ODC1. Interacts with GGN. As to expression, testis specific.

Its subcellular location is the nucleus. The protein resides in the cytoplasm. Its function is as follows. Ornithine decarboxylase (ODC) antizyme protein that negatively regulates ODC activity and intracellular polyamine biosynthesis and uptake in response to increased intracellular polyamine levels. Binds to ODC monomers, inhibiting the assembly of the functional ODC homodimers. Does not target the ODC monomers for degradation, which allows a protein synthesis-independent restoration of ODC activity. Stabilizes AZIN2 by interfering with its ubiquitination. Involved in the translocation of AZNI2 from ER-Golgi intermediate compartment (ERGIC) to the cytosol. Probably plays a key role in spermatogenesis by regulating the intracellular concentration of polyamines in haploid germ cells. The sequence is that of Ornithine decarboxylase antizyme 3 (OAZ3) from Homo sapiens (Human).